The sequence spans 44 residues: Protein PsbN (44 aa).

The chain crosses the membrane as a helical span at residues 6 to 26; it reads FFFTFFLWFLLLSVTGYSVYV.

It belongs to the PsbN family.

It localises to the plastid. The protein resides in the chloroplast thylakoid membrane. Functionally, may play a role in photosystem I and II biogenesis. This Chlamydomonas reinhardtii (Chlamydomonas smithii) protein is Protein PsbN.